The following is a 524-amino-acid chain: Cytochrome P450 monooxygenase patH (524 aa).

Residues 1-4 are Cytoplasmic-facing; the sequence is MEPF. A helical transmembrane segment spans residues 5–22; that stretch reads LLLLLVLLPAIVLVRYAF. The Lumenal segment spans residues 23 to 524; that stretch reads TYGHRTSTMP…ADVFSRFTEG (502 aa). The N-linked (GlcNAc...) asparagine glycan is linked to asparagine 266. Cysteine 442 contacts heme.

The protein belongs to the cytochrome P450 family. The cofactor is heme.

It localises to the endoplasmic reticulum membrane. It catalyses the reaction 3-methylphenol + reduced [NADPH--hemoprotein reductase] + O2 = 3-hydroxybenzyl alcohol + oxidized [NADPH--hemoprotein reductase] + H2O + H(+). It functions in the pathway mycotoxin biosynthesis; patulin biosynthesis. In terms of biological role, cytochrome P450 monooxygenase; part of the gene cluster that mediates the biosynthesis of patulin, an acetate-derived tetraketide mycotoxin produced by several fungal species that shows antimicrobial properties against several bacteria. PatH catalyzes the conversion of m-cresol into m-hydroxybenzyl alcohol. The pathway begins with the synthesis of 6-methylsalicylic acid by the polyketide synthase (PKS) patK via condensation of acetate and malonate units. The 6-methylsalicylic acid decarboxylase patG then catalyzes the decarboxylation of 6-methylsalicylic acid to yield m-cresol (also known as 3-methylphenol). These first reactions occur in the cytosol. The intermediate m-cresol is then transported into the endoplasmic reticulum where the cytochrome P450 monooxygenase patH converts it to m-hydroxybenzyl alcohol, which is further converted to gentisyl alcohol by the cytochrome P450 monooxygenase patI. The oxidoreductases patJ and patO further convert gentisyl alcohol to isoepoxydon in the vacuole. PatN catalyzes then the transformation of isoepoxydon into phyllostine. The cluster protein patF is responsible for the conversion from phyllostine to neopatulin whereas the alcohol dehydrogenase patD converts neopatulin to E-ascladiol. The steps between isoepoxydon and E-ascladiol occur in the cytosol, and E-ascladiol is probably secreted to the extracellular space by one of the cluster-specific transporters patC or patM. Finally, the secreted patulin synthase patE catalyzes the conversion of E-ascladiol to patulin. The protein is Cytochrome P450 monooxygenase patH of Penicillium expansum (Blue mold rot fungus).